The primary structure comprises 205 residues: LexA repressor (205 aa).

The segment at residues 28-48 (VREIGEAVGLASSSTVHGHLA) is a DNA-binding region (H-T-H motif). Active-site for autocatalytic cleavage activity residues include Ser127 and Lys165.

It belongs to the peptidase S24 family. In terms of assembly, homodimer. Following treatment with mitomycin C protein levels begin to decrease after a 5-min lag and do not return to their original levels for at least 90 minutes.

The enzyme catalyses Hydrolysis of Ala-|-Gly bond in repressor LexA.. Represses dinA, dinB, dinC, recA genes and itself by binding to the 14 bp palindromic sequence 5'-CGAACNNNNGTTCG-3'; some genes have a tandem consensus sequence and their binding is cooperative. In the presence of single-stranded DNA, RecA interacts with LexA causing an autocatalytic cleavage which disrupts the DNA-binding part of LexA, leading to derepression of the SOS regulon and eventually DNA repair; autocleavage is maximal at pH 11 in the absence of RecA and ssDNA. The chain is LexA repressor from Bacillus subtilis (strain 168).